We begin with the raw amino-acid sequence, 372 residues long: Glycerophosphodiester phosphodiesterase GDPD6 (372 aa).

A signal peptide spans 1–21 (MAFKYLLPLLLLSLLVANCAS). A disordered region spans residues 32–58 (KHATKKPLQTSRPYNLAHRGSNGELPE). Positions 44–362 (PYNLAHRGSN…DFTGSLHNYQ (319 aa)) constitute a GP-PDE domain. N-linked (GlcNAc...) asparagine glycosylation is found at asparagine 120, asparagine 239, and asparagine 260.

The protein belongs to the glycerophosphoryl diester phosphodiesterase family. As to expression, expressed in flowers and siliques.

It catalyses the reaction a sn-glycero-3-phosphodiester + H2O = an alcohol + sn-glycerol 3-phosphate + H(+). This Arabidopsis thaliana (Mouse-ear cress) protein is Glycerophosphodiester phosphodiesterase GDPD6.